The sequence spans 245 residues: tRNA pseudouridine synthase A 2 (245 aa).

Asp-53 acts as the Nucleophile in catalysis. Tyr-111 contacts substrate.

Belongs to the tRNA pseudouridine synthase TruA family. Homodimer.

The catalysed reaction is uridine(38/39/40) in tRNA = pseudouridine(38/39/40) in tRNA. In terms of biological role, formation of pseudouridine at positions 38, 39 and 40 in the anticodon stem and loop of transfer RNAs. This is tRNA pseudouridine synthase A 2 from Bacillus cereus (strain ZK / E33L).